We begin with the raw amino-acid sequence, 141 residues long: Hemoglobin subunit alpha (141 aa).

The region spanning 1 to 141 (VLSSDDKCNV…VSSVLTSKYR (141 aa)) is the Globin domain. An O2-binding site is contributed by His58. His87 contributes to the heme b binding site.

This sequence belongs to the globin family. As to quaternary structure, heterotetramer of two alpha chains and two beta chains. As to expression, red blood cells.

In terms of biological role, involved in oxygen transport from the lung to the various peripheral tissues. Has antimicrobial activity against B.subtilis ATCC 6633. Has antioxidant activity. This Crocodylus siamensis (Siamese crocodile) protein is Hemoglobin subunit alpha.